A 488-amino-acid chain; its full sequence is Germacrene A hydroxylase (488 aa).

A helical; Signal-anchor for type II membrane protein transmembrane segment spans residues 7–23 (TSIALATILFFVYKFAT). 4 N-linked (GlcNAc...) asparagine glycosylation sites follow: Asn-169, Asn-260, Asn-379, and Asn-410. Cys-432 serves as a coordination point for heme.

It belongs to the cytochrome P450 family. In terms of tissue distribution, expressed in floral glandular trichomes.

The protein resides in the endoplasmic reticulum membrane. It catalyses the reaction (+)-(R)-germacrene A + 3 reduced [NADPH--hemoprotein reductase] + 3 O2 = germacra-1(10),4,11(13)-trien-12-oate + 3 oxidized [NADPH--hemoprotein reductase] + 4 H2O + 4 H(+). It functions in the pathway secondary metabolite biosynthesis; terpenoid biosynthesis. Functionally, involved in the biosynthesis of germacrene-derived sesquiterpene lactones. Component of the parthenolide biosynthetic pathway; parthenolide and conjugates are promising anti-cancer drugs highly active against colon cancer cells. Catalyzes three consecutive oxidations of germacrene A to produce germacrene A acid. The sequence is that of Germacrene A hydroxylase from Tanacetum parthenium (Feverfew).